The primary structure comprises 265 residues: MDKKTWVYIIIAIIIILLLVWYFRNHMSDQKGVNVNNQTYNMLQQQISSLNQQILFLKQQISNLHVPAPTSTVNSLRQTVSDINQQVSTINNQISSLNPYLPRNQQLELASVLSIFNRNALDLNNISRSVINRDINYFNAGQHGSQVPQNSHTVQNPNVADNELNVLQQKVDNLNGVVSNIRQHLAQFGSGIPESFRDEAEKAASYLNDRIDDINKNLPNLVQRLNPNQRNNLNRILSELNNDLSSLKNSLGSAVRNRINSVNIH.

The helical; Signal-anchor for type II membrane protein transmembrane segment at 3-23 (KKTWVYIIIAIIIILLLVWYF) threads the bilayer. Asn37 and Asn125 each carry an N-linked (GlcNAc...) asparagine; by host glycan. The stretch at 37-94 (NQTYNMLQQQISSLNQQILFLKQQISNLHVPAPTSTVNSLRQTVSDINQQVSTINNQI) forms a coiled coil. The stretch at 158-257 (NVADNELNVL…KNSLGSAVRN (100 aa)) forms a coiled coil.

The protein resides in the host membrane. It is found in the virion. This is an uncharacterized protein from Acanthamoeba polyphaga (Amoeba).